The primary structure comprises 681 residues: Potassium-transporting ATPase ATP-binding subunit (681 aa).

The next 4 helical transmembrane spans lie at 30 to 50 (LLVY…FFGI), 59 to 79 (LAIA…EAIA), 216 to 236 (ILLV…LPFT), and 255 to 275 (IALL…SIGI). D306 (4-aspartylphosphate intermediate) is an active-site residue. Residues D343, E347, 376-383 (FTATTRMS), and K394 each bind ATP. Residues D517 and D521 each contribute to the Mg(2+) site. 3 consecutive transmembrane segments (helical) span residues 587 to 607 (FAII…LNLM), 615 to 635 (AILS…PLSL), and 661 to 681 (LVAP…LGIV).

It belongs to the cation transport ATPase (P-type) (TC 3.A.3) family. Type IA subfamily. As to quaternary structure, the system is composed of three essential subunits: KdpA, KdpB and KdpC.

Its subcellular location is the cell membrane. It catalyses the reaction K(+)(out) + ATP + H2O = K(+)(in) + ADP + phosphate + H(+). Part of the high-affinity ATP-driven potassium transport (or Kdp) system, which catalyzes the hydrolysis of ATP coupled with the electrogenic transport of potassium into the cytoplasm. This subunit is responsible for energy coupling to the transport system and for the release of the potassium ions to the cytoplasm. This is Potassium-transporting ATPase ATP-binding subunit from Listeria welshimeri serovar 6b (strain ATCC 35897 / DSM 20650 / CCUG 15529 / CIP 8149 / NCTC 11857 / SLCC 5334 / V8).